Reading from the N-terminus, the 194-residue chain is dITP/XTP pyrophosphatase (194 aa).

7 to 12 (SGNVNK) contacts substrate. Mg(2+) is bound by residues E38 and D67. The Proton acceptor role is filled by D67. Substrate-binding positions include S68, 151–154 (FGYD), K174, and 179–180 (HR).

It belongs to the HAM1 NTPase family. In terms of assembly, homodimer. It depends on Mg(2+) as a cofactor.

The catalysed reaction is XTP + H2O = XMP + diphosphate + H(+). It carries out the reaction dITP + H2O = dIMP + diphosphate + H(+). The enzyme catalyses ITP + H2O = IMP + diphosphate + H(+). In terms of biological role, pyrophosphatase that catalyzes the hydrolysis of nucleoside triphosphates to their monophosphate derivatives, with a high preference for the non-canonical purine nucleotides XTP (xanthosine triphosphate), dITP (deoxyinosine triphosphate) and ITP. Seems to function as a house-cleaning enzyme that removes non-canonical purine nucleotides from the nucleotide pool, thus preventing their incorporation into DNA/RNA and avoiding chromosomal lesions. This chain is dITP/XTP pyrophosphatase, found in Treponema denticola (strain ATCC 35405 / DSM 14222 / CIP 103919 / JCM 8153 / KCTC 15104).